A 144-amino-acid chain; its full sequence is Transcription antitermination protein NusB (144 aa).

The protein belongs to the NusB family.

Its function is as follows. Involved in transcription antitermination. Required for transcription of ribosomal RNA (rRNA) genes. Binds specifically to the boxA antiterminator sequence of the ribosomal RNA (rrn) operons. The chain is Transcription antitermination protein NusB from Carboxydothermus hydrogenoformans (strain ATCC BAA-161 / DSM 6008 / Z-2901).